Reading from the N-terminus, the 459-residue chain is Vacuolar amino acid transporter 5 (459 aa).

8 helical membrane passes run Gly8 to Phe28, Leu33 to Leu53, Val82 to Ile102, Phe131 to Phe151, Ala161 to Val181, Leu206 to Ile226, Ile240 to Tyr260, and Ser278 to Leu298. Over residues Phe335–Glu351 the composition is skewed to polar residues. Residues Phe335 to Leu354 form a disordered region. A run of 3 helical transmembrane segments spans residues Ile364–Ala384, Val386–Phe406, and Leu434–Leu454.

The protein belongs to the amino acid/polyamine transporter 2 family.

It localises to the vacuole membrane. Its function is as follows. Probable amino acid transporter of unknown specificity. In Saccharomyces cerevisiae (strain ATCC 204508 / S288c) (Baker's yeast), this protein is Vacuolar amino acid transporter 5 (AVT5).